A 141-amino-acid polypeptide reads, in one-letter code: Small ribosomal subunit protein bS6 (141 aa).

Residues 96–141 (VTGQSEMLKAEENRSERRERRERPEHADSAEGDDSNDSDSSDNADE) are disordered. The span at 103 to 124 (LKAEENRSERRERRERPEHADS) shows a compositional bias: basic and acidic residues. A compositionally biased stretch (acidic residues) spans 125-141 (AEGDDSNDSDSSDNADE).

Belongs to the bacterial ribosomal protein bS6 family.

In terms of biological role, binds together with bS18 to 16S ribosomal RNA. The protein is Small ribosomal subunit protein bS6 of Pseudomonas putida (strain ATCC 700007 / DSM 6899 / JCM 31910 / BCRC 17059 / LMG 24140 / F1).